The following is a 360-amino-acid chain: uncharacterized protein (360 aa).

The PNPLA domain occupies 19 to 179 (LALGSGGARG…LDPLPMAPIA (161 aa)). The short motif at 50-54 (GSSMG) is the GXSXG element. Ser-52 functions as the Nucleophile in the catalytic mechanism. The active-site Proton acceptor is the Asp-166. The DGA/G motif lies at 166–168 (DGG). The segment at 251–282 (DSWSQAPEIEQRPAGPPADREEAADTPGLPKM) is disordered.

Belongs to the NTE family.

This is an uncharacterized protein from Mycobacterium bovis (strain ATCC BAA-935 / AF2122/97).